The sequence spans 534 residues: NAD(P)H-quinone oxidoreductase chain 4 2 (534 aa).

14 consecutive transmembrane segments (helical) span residues F9 to I29, W51 to G71, L106 to L126, L130 to D150, L152 to W172, F184 to F204, L227 to H247, T258 to M278, L290 to T310, I326 to G346, A347 to A367, L399 to G419, L432 to M452, and V479 to V499.

Belongs to the complex I subunit 4 family.

It localises to the cellular thylakoid membrane. It carries out the reaction a plastoquinone + NADH + (n+1) H(+)(in) = a plastoquinol + NAD(+) + n H(+)(out). The enzyme catalyses a plastoquinone + NADPH + (n+1) H(+)(in) = a plastoquinol + NADP(+) + n H(+)(out). In terms of biological role, NDH-1 shuttles electrons from NAD(P)H, via FMN and iron-sulfur (Fe-S) centers, to quinones in the respiratory chain. The immediate electron acceptor for the enzyme in this species is believed to be plastoquinone. Couples the redox reaction to proton translocation (for every two electrons transferred, four hydrogen ions are translocated across the cytoplasmic membrane), and thus conserves the redox energy in a proton gradient. In Synechococcus sp. (strain JA-2-3B'a(2-13)) (Cyanobacteria bacterium Yellowstone B-Prime), this protein is NAD(P)H-quinone oxidoreductase chain 4 2.